The primary structure comprises 450 residues: 23S rRNA (uracil(1939)-C(5))-methyltransferase RlmD (450 aa).

The TRAM domain occupies 12–70; it reads SKQLSAKLSLSVNQLDHLGAGIAQHQGKVVFIPGALPDETVTVQLTEQKKNYARAKLIK. Cys-83, Cys-89, Cys-92, and Cys-171 together coordinate [4Fe-4S] cluster. Residues Gln-283, Phe-312, Asn-317, Glu-333, Asp-360, and Asp-380 each contribute to the S-adenosyl-L-methionine site. Catalysis depends on Cys-406, which acts as the Nucleophile.

This sequence belongs to the class I-like SAM-binding methyltransferase superfamily. RNA M5U methyltransferase family. RlmD subfamily.

The enzyme catalyses uridine(1939) in 23S rRNA + S-adenosyl-L-methionine = 5-methyluridine(1939) in 23S rRNA + S-adenosyl-L-homocysteine + H(+). In terms of biological role, catalyzes the formation of 5-methyl-uridine at position 1939 (m5U1939) in 23S rRNA. The protein is 23S rRNA (uracil(1939)-C(5))-methyltransferase RlmD of Shewanella baltica (strain OS195).